A 189-amino-acid chain; its full sequence is Ribosome-recycling factor (189 aa).

This sequence belongs to the RRF family.

It is found in the cytoplasm. In terms of biological role, responsible for the release of ribosomes from messenger RNA at the termination of protein biosynthesis. May increase the efficiency of translation by recycling ribosomes from one round of translation to another. This chain is Ribosome-recycling factor, found in Salinibacter ruber (strain DSM 13855 / M31).